The following is a 309-amino-acid chain: Glutaminase (309 aa).

7 residues coordinate substrate: Ser65, Asn117, Glu162, Asn169, Tyr193, Tyr245, and Val263.

It belongs to the glutaminase family. In terms of assembly, homotetramer.

The catalysed reaction is L-glutamine + H2O = L-glutamate + NH4(+). The polypeptide is Glutaminase (Shouchella clausii (strain KSM-K16) (Alkalihalobacillus clausii)).